We begin with the raw amino-acid sequence, 186 residues long: Putative 3-methyladenine DNA glycosylase (186 aa).

Belongs to the DNA glycosylase MPG family.

This Borrelia garinii subsp. bavariensis (strain ATCC BAA-2496 / DSM 23469 / PBi) (Borreliella bavariensis) protein is Putative 3-methyladenine DNA glycosylase.